A 281-amino-acid chain; its full sequence is Tumor necrosis factor ligand superfamily member 10 (281 aa).

The Cytoplasmic portion of the chain corresponds to 1-17 (MAMMEVQGGPSLGQTCV). The helical; Signal-anchor for type II membrane protein transmembrane segment at 18 to 38 (LIVIFTVLLQSLCVAVTYVYF) threads the bilayer. Residues 39–281 (TNELKQMQDK…ASFFGAFLVG (243 aa)) lie on the Extracellular side of the membrane. The THD domain maps to 122 to 280 (VAAHITGTRG…EASFFGAFLV (159 aa)). Positions 124–144 (AHITGTRGRSNTLSSPNSKNE) are disordered. Over residues 130-141 (RGRSNTLSSPNS) the composition is skewed to polar residues. Cys230 is a binding site for Zn(2+).

It belongs to the tumor necrosis factor family. In terms of assembly, homotrimer. One TNFSF10 homotrimer interacts with three TNFSF10A mononers. One TNFSF10 homotrimer interacts with three TNFSF10B mononers. Post-translationally, tyrosine phosphorylated by PKDCC/VLK. As to expression, widespread; most predominant in spleen, lung and prostate.

The protein resides in the cell membrane. Its subcellular location is the secreted. Functionally, cytokine that binds to TNFRSF10A/TRAILR1, TNFRSF10B/TRAILR2, TNFRSF10C/TRAILR3, TNFRSF10D/TRAILR4 and possibly also to TNFRSF11B/OPG. Induces apoptosis. Its activity may be modulated by binding to the decoy receptors TNFRSF10C/TRAILR3, TNFRSF10D/TRAILR4 and TNFRSF11B/OPG that cannot induce apoptosis. The polypeptide is Tumor necrosis factor ligand superfamily member 10 (TNFSF10) (Homo sapiens (Human)).